Consider the following 375-residue polypeptide: MENFPTEYFLNTSVRLLEYIRYRDSNYTREERIENLHYAYNKAAHHFAQPRQQQMLKVDPKRLQASLQTIVGMVVYSWAKVSKECMADLSIHYTYTLVLDDSSDDPHPAMLNYFDDLQAGREQSHPWWALVNEHFPNVLRHFGPFCSLNLIRSTMDFFEGCWIEQYNFGGFPGSDDYPQFLRRMNGLGHCVGASLWPKDLFDERKNFLEITTAVAQMENWMVWVNDLMSFYKEFDDERDQISLVKNFVTCHEITLDEALEKLTQETLHSSKQMVAVFADKDPQVMDTIECFMHGYVTWHLCDARYRLHEIYEKVKDQDTEDAKKFCKFFEQAANVGAVAPSEWAYPQVAQLANVRAKDDMKEAHKPILSSIELVE.

The protein belongs to the trichodiene synthase family.

The enzyme catalyses (2E,6E)-farnesyl diphosphate = trichodiene + diphosphate. It participates in sesquiterpene biosynthesis; trichothecene biosynthesis. TS is a member of the terpene cyclase group of enzymes. It catalyzes the isomerization and cyclization of farnesyl pyro-phosphate to form trichodiene, the first cyclic intermediate in the biosynthetic pathway for trichothecenes. It serves to branch trichothecene biosynthesis from the isoprenoid pathway. The polypeptide is Trichodiene synthase (TRI5) (Fusarium austroamericanum).